A 481-amino-acid chain; its full sequence is 3-isopropylmalate dehydratase large subunit (481 aa).

[4Fe-4S] cluster-binding residues include C357, C417, and C420. Residues 429–441 show a composition bias toward polar residues; that stretch reads SPGQRCASTSNRN. The disordered stretch occupies residues 429–451; sequence SPGQRCASTSNRNFEGRQGKGGR.

It belongs to the aconitase/IPM isomerase family. LeuC type 1 subfamily. As to quaternary structure, heterodimer of LeuC and LeuD. The cofactor is [4Fe-4S] cluster.

The catalysed reaction is (2R,3S)-3-isopropylmalate = (2S)-2-isopropylmalate. The protein operates within amino-acid biosynthesis; L-leucine biosynthesis; L-leucine from 3-methyl-2-oxobutanoate: step 2/4. In terms of biological role, catalyzes the isomerization between 2-isopropylmalate and 3-isopropylmalate, via the formation of 2-isopropylmaleate. In Mycobacterium sp. (strain JLS), this protein is 3-isopropylmalate dehydratase large subunit.